The chain runs to 486 residues: 2-isopropylmalate synthase (486 aa).

The Pyruvate carboxyltransferase domain occupies 4 to 266 (VYIFDTTLRD…KTDVNLKEIA (263 aa)). The Mn(2+) site is built by Asp13, His201, His203, and Asn237. Residues 390-486 (KVEIIHVTSG…LSTDIIEASA (97 aa)) form a regulatory domain region.

It belongs to the alpha-IPM synthase/homocitrate synthase family. LeuA type 1 subfamily. The cofactor is Mn(2+).

The protein resides in the cytoplasm. It catalyses the reaction 3-methyl-2-oxobutanoate + acetyl-CoA + H2O = (2S)-2-isopropylmalate + CoA + H(+). It participates in amino-acid biosynthesis; L-leucine biosynthesis; L-leucine from 3-methyl-2-oxobutanoate: step 1/4. Catalyzes the condensation of the acetyl group of acetyl-CoA with 3-methyl-2-oxobutanoate (2-ketoisovalerate) to form 3-carboxy-3-hydroxy-4-methylpentanoate (2-isopropylmalate). This chain is 2-isopropylmalate synthase, found in Pyrococcus abyssi (strain GE5 / Orsay).